The chain runs to 364 residues: 1-acyl-sn-glycerol-3-phosphate acyltransferase epsilon (364 aa).

The next 2 membrane-spanning stretches (helical) occupy residues 15-35 (LLPSVVLLGTAPTYVLAWGVW) and 61-81 (MVLFFFENYTGVQILLYGDLP). The HXXXXD motif motif lies at 93–98 (HQSTVD). A helical membrane pass occupies residues 344–364 (LYVNTWIYGTLLGCLWVTIKA).

Belongs to the 1-acyl-sn-glycerol-3-phosphate acyltransferase family. As to expression, widely expressed.

The protein resides in the endoplasmic reticulum membrane. It localises to the nucleus envelope. Its subcellular location is the mitochondrion. It catalyses the reaction a 1-acyl-sn-glycero-3-phosphate + an acyl-CoA = a 1,2-diacyl-sn-glycero-3-phosphate + CoA. It carries out the reaction 1-(9Z-octadecenoyl)-sn-glycero-3-phosphate + tetradecanoyl-CoA = 1-(9Z)-octadecenoyl-2-tetradecanoyl-sn-glycero-3-phosphate + CoA. The enzyme catalyses pentadecanoyl-CoA + 1-(9Z-octadecenoyl)-sn-glycero-3-phosphate = 1-(9Z)-octadecenoyl-2-pentadecanoyl-sn-glycero-3-phosphate + CoA. The catalysed reaction is 1-(9Z-octadecenoyl)-sn-glycero-3-phosphate + octadecanoyl-CoA = 1-(9Z-octadecenoyl)-2-octadecanoyl-sn-glycero-3-phosphate + CoA. It catalyses the reaction nonadecanoyl-CoA + 1-(9Z-octadecenoyl)-sn-glycero-3-phosphate = 1-(9Z)-octadecenoyl-2-nonadecanoyl-sn-glycero-3-phosphate + CoA. It carries out the reaction 1-(9Z-octadecenoyl)-sn-glycero-3-phosphoethanolamine + (9Z)-octadecenoyl-CoA = 1,2-di-(9Z-octadecenoyl)-sn-glycero-3-phosphoethanolamine + CoA. The enzyme catalyses 1-(9Z-octadecenoyl)-sn-glycero-3-phosphocholine + (9Z)-octadecenoyl-CoA = 1,2-di-(9Z-octadecenoyl)-sn-glycero-3-phosphocholine + CoA. The catalysed reaction is 1-(9Z-octadecenoyl)-sn-glycero-3-phospho-(1D-myo-inositol) + (5Z,8Z,11Z,14Z)-eicosatetraenoyl-CoA = 1-(9Z-octadecenoyl)-2-(5Z,8Z,11Z,14Z-eicosatetraenoyl)-sn-glycero-3-phospho-1D-myo-inositol + CoA. It catalyses the reaction 1-(9Z-octadecenoyl)-sn-glycero-3-phospho-L-serine + (9Z)-octadecenoyl-CoA = 1,2-di-(9Z)-octadecenoyl-sn-glycero-3-phospho-L-serine + CoA. It carries out the reaction 1-(9Z-octadecenoyl)-sn-glycero-3-phospho-L-serine + (5Z,8Z,11Z,14Z)-eicosatetraenoyl-CoA = 1-(9Z-octadecenoyl)-2-(5Z,8Z,11Z,14Z-eicosatetraenoyl)-sn-glycero-3-phospho-L-serine + CoA. The enzyme catalyses 1-hexadecanoyl-sn-glycero-3-phosphate + (9Z)-octadecenoyl-CoA = 1-hexadecanoyl-2-(9Z-octadecenoyl)-sn-glycero-3-phosphate + CoA. The catalysed reaction is 1-heptadecanoyl-sn-glycero-3-phosphate + (9Z)-octadecenoyl-CoA = 1-heptadecanoyl-2-(9Z)-octadecenoyl-sn-glycero-3-phosphate + CoA. It catalyses the reaction 1-(5Z,8Z,11Z,14Z-eicosatetraenoyl)-sn-glycero-3-phosphate + (9Z)-octadecenoyl-CoA = 1-(5Z,8Z,11Z,14Z)-eicosatetraenoyl-2-(9Z)-octadecenoyl-sn-glycero-3-phosphate + CoA. It carries out the reaction 1-octadecanoyl-sn-glycero-3-phosphate + (9Z)-octadecenoyl-CoA = 1-octadecanoyl-2-(9Z-octadecenoyl)-sn-glycero-3-phosphate + CoA. The enzyme catalyses 1-(9Z-octadecenoyl)-sn-glycero-3-phosphate + (5Z,8Z,11Z,14Z)-eicosatetraenoyl-CoA = 1-(9Z)-octadecenoyl-2-(5Z,8Z,11Z,14Z)-eicosatetraenoyl-sn-glycero-3-phosphate + CoA. The catalysed reaction is heptadecanoyl-CoA + 1-(9Z-octadecenoyl)-sn-glycero-3-phosphate = 1-(9Z)-octadecenoyl-2-heptadecanoyl-sn-glycero-3-phosphate + CoA. It catalyses the reaction 1-(9Z-octadecenoyl)-sn-glycero-3-phosphocholine + (5Z,8Z,11Z,14Z)-eicosatetraenoyl-CoA = 1-(9Z)-octadecenoyl-2-(5Z,8Z,11Z,14Z)-icosatetraenoyl-sn-glycero-3-phosphocholine + CoA. It carries out the reaction 1-(9Z-octadecenoyl)-sn-glycero-3-phosphate + (9Z)-octadecenoyl-CoA = 1,2-di-(9Z-octadecenoyl)-sn-glycero-3-phosphate + CoA. The enzyme catalyses 1-(9Z-octadecenoyl)-sn-glycero-3-phosphate + hexadecanoyl-CoA = 1-hexadecanoyl-2-(9Z-octadecenoyl)-sn-glycero-3-phosphate + CoA. The protein operates within phospholipid metabolism; CDP-diacylglycerol biosynthesis; CDP-diacylglycerol from sn-glycerol 3-phosphate: step 2/3. Converts 1-acyl-sn-glycerol-3-phosphate (lysophosphatidic acid or LPA) into 1,2-diacyl-sn-glycerol-3-phosphate (phosphatidic acid or PA) by incorporating an acyl moiety at the sn-2 position of the glycerol backbone. Acts on LPA containing saturated or unsaturated fatty acids C15:0-C20:4 at the sn-1 position using C18:1-CoA as the acyl donor. Also acts on lysophosphatidylethanolamine using oleoyl-CoA, but not arachidonoyl-CoA, and lysophosphatidylinositol using arachidonoyl-CoA, but not oleoyl-CoA. Activity toward lysophosphatidylglycerol not detectable. This Homo sapiens (Human) protein is 1-acyl-sn-glycerol-3-phosphate acyltransferase epsilon (AGPAT5).